Reading from the N-terminus, the 699-residue chain is D-(-)-3-hydroxybutyrate oligomer hydrolase (699 aa).

Positions 1–33 (MTAIRGGSRRAPGLALALLGGVLLGACHGDENA) are cleaved as a signal peptide. S311 functions as the Charge relay system in the catalytic mechanism.

It belongs to the D-(-)-3-hydroxybutyrate oligomer hydrolase family.

Its subcellular location is the secreted. The enzyme catalyses (3R)-hydroxybutanoate dimer + H2O = 2 (R)-3-hydroxybutanoate + H(+). The protein operates within lipid metabolism; butanoate metabolism. Its function is as follows. Participates in the degradation of poly-3-hydroxybutyrate (PHB). It works downstream of poly(3-hydroxybutyrate) depolymerase, hydrolyzing D(-)-3-hydroxybutyrate oligomers of various length (3HB-oligomers) into 3HB-monomers. The sequence is that of D-(-)-3-hydroxybutyrate oligomer hydrolase from Burkholderia pseudomallei (strain 1106a).